The primary structure comprises 394 residues: NAD(P)H-quinone oxidoreductase subunit H (394 aa).

This sequence belongs to the complex I 49 kDa subunit family. NDH-1 can be composed of about 15 different subunits; different subcomplexes with different compositions have been identified which probably have different functions.

Its subcellular location is the cellular thylakoid membrane. It carries out the reaction a plastoquinone + NADH + (n+1) H(+)(in) = a plastoquinol + NAD(+) + n H(+)(out). The catalysed reaction is a plastoquinone + NADPH + (n+1) H(+)(in) = a plastoquinol + NADP(+) + n H(+)(out). Its function is as follows. NDH-1 shuttles electrons from an unknown electron donor, via FMN and iron-sulfur (Fe-S) centers, to quinones in the respiratory and/or the photosynthetic chain. The immediate electron acceptor for the enzyme in this species is believed to be plastoquinone. Couples the redox reaction to proton translocation, and thus conserves the redox energy in a proton gradient. Cyanobacterial NDH-1 also plays a role in inorganic carbon-concentration. The chain is NAD(P)H-quinone oxidoreductase subunit H from Parasynechococcus marenigrum (strain WH8102).